Reading from the N-terminus, the 496-residue chain is Gamma-aminobutyric acid receptor subunit beta-like (496 aa).

Positions Met1–Ala20 form a signal peptide, or 27. Residues Gln21 to Tyr258 lie on the Extracellular side of the membrane. Residues Asn39 and Asn189 are each glycosylated (N-linked (GlcNAc...) asparagine). A disulfide bond links Cys176 and Cys190. 3 helical membrane-spanning segments follow: residues Phe259–Ile280, Thr285–Val306, and Ala318–Tyr342. The Cytoplasmic portion of the chain corresponds to Thr343–Lys472. The helical transmembrane segment at Tyr473–Ile494 threads the bilayer.

It belongs to the ligand-gated ion channel (TC 1.A.9) family. Gamma-aminobutyric acid receptor (TC 1.A.9.5) subfamily. In terms of assembly, generally pentameric. There are five types of GABA(A) receptor chains: alpha, beta, gamma, delta, and rho. Interacts with Grd (alpha chain).

Its subcellular location is the postsynaptic cell membrane. It localises to the cell membrane. GABA, an inhibitory neurotransmitter, mediates neuronal inhibition by binding to the GABA receptor and opening an integral chloride channel. Combines with the ligand-gated ion channel subunit GRD to form cation-selective GABA-gated ion channels when coexpressed in Xenopus laevis oocytes. This is Gamma-aminobutyric acid receptor subunit beta-like (Lcch3) from Drosophila melanogaster (Fruit fly).